The chain runs to 190 residues: Nucleoside triphosphate pyrophosphatase (190 aa).

The Proton acceptor role is filled by aspartate 69.

This sequence belongs to the Maf family. A divalent metal cation serves as cofactor.

The protein localises to the cytoplasm. The catalysed reaction is a ribonucleoside 5'-triphosphate + H2O = a ribonucleoside 5'-phosphate + diphosphate + H(+). The enzyme catalyses a 2'-deoxyribonucleoside 5'-triphosphate + H2O = a 2'-deoxyribonucleoside 5'-phosphate + diphosphate + H(+). Its function is as follows. Nucleoside triphosphate pyrophosphatase. May have a dual role in cell division arrest and in preventing the incorporation of modified nucleotides into cellular nucleic acids. The polypeptide is Nucleoside triphosphate pyrophosphatase (Helicobacter pylori (strain G27)).